A 224-amino-acid polypeptide reads, in one-letter code: MGLFGKTQEKPPKELVNEWSLKIRKEMRVVDRQIRDIQREEEKVKRSVKDAAKKGQKEVCVVLAKEMIRSRKAVSKLYASKAHMNSVLMGMKNQLAVLRVAGSLQKSTEVMKAMQSLVKIPEIQATMRELSKEMMKAGIIEEMLEDTFESMDDQEEMEEAAEMEIDRILFEITAGALGKAPSKVTDALPEPEPAGAMAASEEGEEEEDEEDLEAMQSRLATLRS.

Residue G2 is the site of N-myristoyl glycine attachment. The intramolecular interaction with C-terminus stretch occupies residues G2 to A113. Positions K22–K54 form a coiled coil. Important for autoinhibitory function stretches follow at residues V59–A64 and I168–L169. A coiled-coil region spans residues E149 to S224. The tract at residues M151–L222 is intramolecular interaction with N-terminus. Residues M151 to S224 form an interaction with VPS4A region. A Glycyl lysine isopeptide (Lys-Gly) (interchain with G-Cter in ubiquitin) cross-link involves residue K179. Residues A180 to S224 are disordered. Interaction with STAMBP regions lie at residues A196–S224, E205–E209, and R223–S224. S200 carries the post-translational modification Phosphoserine. The short motif at E201–E213 is the MIT-interacting motif element. Over residues E201–E213 the composition is skewed to acidic residues.

The protein belongs to the SNF7 family. Probable core component of the endosomal sorting required for transport complex III (ESCRT-III). ESCRT-III components are thought to multimerize to form a flat lattice on the perimeter membrane of the endosome. Several assembly forms of ESCRT-III may exist that interact and act sequentially. Forms a metastable monomer in solution; its core structure (without part of the putative autoinhibitory C-terminal acidic region) oligomerizes into a flat lattice via two different dimerization interfaces. In vitro, heteromerizes with CHMP2A (but not CHMP4) to form helical tubular structures that expose membrane-interacting sites on the outside whereas VPS4B can associate on the inside of the tubule. May interact with IGFBP7; the relevance of such interaction however remains unclear. Interacts with CHMP2A. Interacts with CHMP4A; the interaction requires the release of CHMP4A autoinhibition. Interacts with VPS4A. Interacts with STAMBP; the interaction appears to relieve the autoinhibition of CHMP3. Interacts with VTA1. In terms of tissue distribution, expressed in lung, testis, heart, spleen, skeletal muscle, kidney, liver and brain.

The protein localises to the cytoplasm. The protein resides in the cytosol. It localises to the membrane. Its subcellular location is the endosome. It is found in the late endosome membrane. Probable core component of the endosomal sorting required for transport complex III (ESCRT-III) which is involved in multivesicular bodies (MVBs) formation and sorting of endosomal cargo proteins into MVBs. MVBs contain intraluminal vesicles (ILVs) that are generated by invagination and scission from the limiting membrane of the endosome and mostly are delivered to lysosomes enabling degradation of membrane proteins, such as stimulated growth factor receptors, lysosomal enzymes and lipids. The MVB pathway appears to require the sequential function of ESCRT-O, -I,-II and -III complexes. ESCRT-III proteins mostly dissociate from the invaginating membrane before the ILV is released. The ESCRT machinery also functions in topologically equivalent membrane fission events, such as the terminal stages of cytokinesis. ESCRT-III proteins are believed to mediate the necessary vesicle extrusion and/or membrane fission activities, possibly in conjunction with the AAA ATPase VPS4. Selectively binds to phosphatidylinositol 3,5-bisphosphate PtdIns(3,5)P2 and PtdIns(3,4)P2 in preference to other phosphoinositides tested. Involved in late stages of cytokinesis. Plays a role in endosomal sorting/trafficking of EGF receptor. The chain is Charged multivesicular body protein 3 (Chmp3) from Mus musculus (Mouse).